The primary structure comprises 456 residues: MALKIYNTETRQKETFTPIQPNKVGLYVCGVTVYDYCHVGHARVMVVFDTVVRHLRSLGYDVTYVRNITDIDDKIIQRALENKESIQSLTSRFIDAMHEDEKALNVLRPDMEPKATEYMDEIETMISTLIEKDFAYPAENGDVYFHVKADDDYGRLSGKNIEELDSGSRVEINSVKKDPLDFVLWKASKENEPAWQSPWGDGRPGWHIECSAMSTKCLGNHFDIHGGGLDLSFPHHENEIAQSECATGEHYVNSWMHCGFVRIDDEKMSKSLGNFFTIREVLKQYHPEVIRYFLLASHYRSPVNYSEENLDVAKASVGRLYSALELVPADQAEPAESKLEAEFMAAMNDDFNTPQAMAVLFELAKEVNKQKSPGLAALLKKLANQIGLLEQTAESFFKSQPSDSDLTDEMIEALIVERAEARKAKDFSRSDEIRDELLAQGIELLDSAEGTSWRKI.

Cys29 lines the Zn(2+) pocket. The 'HIGH' region signature appears at Val31–His41. Residues Cys210, His235, and Glu239 each coordinate Zn(2+). The 'KMSKS' region motif lies at Lys267–Ser271. Lys270 lines the ATP pocket.

The protein belongs to the class-I aminoacyl-tRNA synthetase family. As to quaternary structure, monomer. It depends on Zn(2+) as a cofactor.

It is found in the cytoplasm. It catalyses the reaction tRNA(Cys) + L-cysteine + ATP = L-cysteinyl-tRNA(Cys) + AMP + diphosphate. In Hydrogenovibrio crunogenus (strain DSM 25203 / XCL-2) (Thiomicrospira crunogena), this protein is Cysteine--tRNA ligase.